Here is a 244-residue protein sequence, read N- to C-terminus: Adenosine 5'-phosphosulfate reductase (244 aa).

[4Fe-4S] cluster is bound by residues cysteine 129, cysteine 130, cysteine 212, and cysteine 215. The active-site Nucleophile; cysteine thiosulfonate intermediate is the cysteine 240.

This sequence belongs to the PAPS reductase family. CysH subfamily. Requires [4Fe-4S] cluster as cofactor.

The protein localises to the cytoplasm. The catalysed reaction is [thioredoxin]-disulfide + sulfite + AMP + 2 H(+) = adenosine 5'-phosphosulfate + [thioredoxin]-dithiol. The protein operates within sulfur metabolism; hydrogen sulfide biosynthesis; sulfite from sulfate. Catalyzes the formation of sulfite from adenosine 5'-phosphosulfate (APS) using thioredoxin as an electron donor. In Neisseria meningitidis serogroup A / serotype 4A (strain DSM 15465 / Z2491), this protein is Adenosine 5'-phosphosulfate reductase.